Reading from the N-terminus, the 252-residue chain is Chitooligosaccharide deacetylase (252 aa).

Mg(2+) is bound by residues His-61 and His-125.

The protein belongs to the YdjC deacetylase family. ChbG subfamily. In terms of assembly, homodimer. The cofactor is Mg(2+).

The protein resides in the cytoplasm. The enzyme catalyses N,N'-diacetylchitobiose + H2O = N-acetyl-beta-D-glucosaminyl-(1-&gt;4)-D-glucosamine + acetate. It carries out the reaction diacetylchitobiose-6'-phosphate + H2O = N'-monoacetylchitobiose-6'-phosphate + acetate. The protein operates within glycan degradation; chitin degradation. Involved in the degradation of chitin. ChbG is essential for growth on the acetylated chitooligosaccharides chitobiose and chitotriose but is dispensable for growth on cellobiose and chitosan dimer, the deacetylated form of chitobiose. Deacetylation of chitobiose-6-P and chitotriose-6-P is necessary for both the activation of the chb promoter by the regulatory protein ChbR and the hydrolysis of phosphorylated beta-glucosides by the phospho-beta-glucosidase ChbF. Catalyzes the removal of only one acetyl group from chitobiose-6-P to yield monoacetylchitobiose-6-P, the inducer of ChbR and the substrate of ChbF. This chain is Chitooligosaccharide deacetylase, found in Escherichia coli O45:K1 (strain S88 / ExPEC).